Consider the following 391-residue polypeptide: Processive diacylglycerol beta-glucosyltransferase (391 aa).

This sequence belongs to the glycosyltransferase 28 family. UgtP subfamily.

It is found in the cell membrane. It catalyses the reaction a 1,2-diacyl-3-O-(beta-D-glucopyranosyl)-sn-glycerol + UDP-alpha-D-glucose = a 1,2-diacyl-3-O-(beta-D-Glc-(1-&gt;6)-beta-D-Glc)-sn-glycerol + UDP + H(+). The catalysed reaction is a 1,2-diacyl-sn-glycerol + UDP-alpha-D-glucose = a 1,2-diacyl-3-O-(beta-D-glucopyranosyl)-sn-glycerol + UDP + H(+). Its pathway is glycolipid metabolism; diglucosyl-diacylglycerol biosynthesis. Processive glucosyltransferase involved in the biosynthesis of both the bilayer- and non-bilayer-forming membrane glucolipids. Is able to successively transfer two glucosyl residues to diacylglycerol (DAG), thereby catalyzing the formation of beta-monoglucosyl-DAG (3-O-(beta-D-glucopyranosyl)-1,2-diacyl-sn-glycerol) and beta-diglucosyl-DAG (3-O-(beta-D-glucopyranosyl-beta-(1-&gt;6)-D-glucopyranosyl)-1,2-diacyl-sn-glycerol). Beta-diglucosyl-DAG is the predominant glycolipid found in Bacillales and is also used as a membrane anchor for lipoteichoic acid (LTA). The sequence is that of Processive diacylglycerol beta-glucosyltransferase from Staphylococcus aureus (strain MRSA252).